A 501-amino-acid chain; its full sequence is Aldehyde dehydrogenase, cytosolic 1 (501 aa).

At Ser-2 the chain carries N-acetylserine. N6-acetyllysine is present on residues Lys-91 and Lys-128. 246-251 (GSTEVG) is an NAD(+) binding site. Position 252 is an N6-acetyllysine (Lys-252). Residue Glu-269 is the Proton acceptor of the active site. Cys-303 functions as the Nucleophile in the catalytic mechanism. An N6-acetyllysine mark is found at Lys-353, Lys-367, and Lys-410. Ser-413 is subject to Phosphoserine. N6-acetyllysine is present on residues Lys-419, Lys-435, and Lys-495.

It belongs to the aldehyde dehydrogenase family. As to quaternary structure, homotetramer. Very low levels in lung and liver.

Its subcellular location is the cytoplasm. It catalyses the reaction an aldehyde + NAD(+) + H2O = a carboxylate + NADH + 2 H(+). It participates in alcohol metabolism; ethanol degradation; acetate from ethanol: step 2/2. Can oxidize benzaldehyde, propionaldehyde and acetaldehyde. No detectable activity with retinal. In Rattus norvegicus (Rat), this protein is Aldehyde dehydrogenase, cytosolic 1 (Aldh1a7).